The sequence spans 569 residues: MATLAAAPWFRVRLIPELKNSQSLLYCRGNHSYRQSLCSRRRSFSVYASAGDGGDVRVRFAPSPTGNLHVGGARTALFNYLYARAKGGKFILRIEDTDLERSTKESEEAVLRDLSWLGPAWDEGPGIGGEYGPYRQSERNALYKQFAEKLLQSGHVYRCFCSNEELEKMKEIAKLKQLPPVYTGRWASATEEEVVEELAKGTPYTYRFRVPKEGSLKIDDLIRGEVSWNLDTLGDFVIMRSNGQPVYNFCVTVDDATMAISHVIRAEEHLPNTLRQALIYKALGFPMPHFAHVSLILAPDRSKLSKRHGATSVGQFRDMGYLPQAMVNYLALLGWGDGTENEFFTLEQLVEKFTIERVNKSGAIFDSTKLRWMNGQHLRSLPSEELNRIIGERWKDAGIATESQGIFIQDAVLLLKDGIDLITDSEKALSSLLSYPLYETLASAEGKPILEDGVSEVAKSLLAAYDSGELSGALAEGQPGWQKWAKNFGKLLKRKGKSLFMPLRVLLTGKLHGPDIGATTVLLYKAGTSGSVVPQAGFVTFDERFKILREVQWESFSTDVPLSAGAVTR.

59–61 (RFA) is a binding site for L-glutamate. The short motif at 62-72 (PSPTGNLHVGG) is the 'HIGH' region element. His69 lines the ATP pocket. Residues Glu95, 247–251 (YNFCV), and Arg265 each bind L-glutamate. ATP contacts are provided by residues Glu268 and 303-307 (KLSKR). The short motif at 303 to 307 (KLSKR) is the 'KMSKS' region element.

It belongs to the class-I aminoacyl-tRNA synthetase family. Glutamate--tRNA ligase type 1 subfamily.

It localises to the plastid. The protein localises to the chloroplast. It is found in the mitochondrion. It carries out the reaction tRNA(Glu) + L-glutamate + ATP = L-glutamyl-tRNA(Glu) + AMP + diphosphate. Catalyzes the attachment of glutamate to tRNA(Glu) in a two-step reaction: glutamate is first activated by ATP to form Glu-AMP and then transferred to the acceptor end of tRNA(Glu). This is Glutamate--tRNA ligase, chloroplastic/mitochondrial from Nicotiana tabacum (Common tobacco).